We begin with the raw amino-acid sequence, 408 residues long: Aminoacylase-1 (408 aa).

His80 contacts Zn(2+). The active site involves Asp82. Position 113 (Asp113) interacts with Zn(2+). The active-site Proton acceptor is the Glu147. Residues Glu148, Glu175, and His373 each coordinate Zn(2+).

It belongs to the peptidase M20A family. In terms of assembly, homodimer. Interacts with SPHK1. Zn(2+) is required as a cofactor. Expression is highest in kidney, strong in brain and weaker in placenta and spleen.

The protein resides in the cytoplasm. It catalyses the reaction an N-acyl-L-amino acid + H2O = an L-alpha-amino acid + a carboxylate. The enzyme catalyses N-acetyl-L-methionine + H2O = L-methionine + acetate. The catalysed reaction is N-acetyl-L-glutamine + H2O = L-glutamine + acetate. Catalyzes the hydrolysis of N-acetylated amino acids to acetate and free amino acids. The polypeptide is Aminoacylase-1 (ACY1) (Homo sapiens (Human)).